Here is a 65-residue protein sequence, read N- to C-terminus: MPKIKTVRGAAKRFKKTAGGGFKRKHANLRHILTKKSTKRKRHLRPKGMVSKGDLGLVIACLPYA.

It belongs to the bacterial ribosomal protein bL35 family.

In Pectobacterium atrosepticum (strain SCRI 1043 / ATCC BAA-672) (Erwinia carotovora subsp. atroseptica), this protein is Large ribosomal subunit protein bL35.